The sequence spans 208 residues: Large ribosomal subunit protein uL4 (208 aa).

The tract at residues 45-96 (RQGTHKSKTRAEVRGGGRKPYRQKGTGNARQGSTRSPLMVGGGTIFGPTPHG) is disordered. Residues 69 to 80 (GTGNARQGSTRS) are compositionally biased toward polar residues.

Belongs to the universal ribosomal protein uL4 family. Part of the 50S ribosomal subunit.

In terms of biological role, one of the primary rRNA binding proteins, this protein initially binds near the 5'-end of the 23S rRNA. It is important during the early stages of 50S assembly. It makes multiple contacts with different domains of the 23S rRNA in the assembled 50S subunit and ribosome. Forms part of the polypeptide exit tunnel. The protein is Large ribosomal subunit protein uL4 of Chlorobium phaeovibrioides (strain DSM 265 / 1930) (Prosthecochloris vibrioformis (strain DSM 265)).